The chain runs to 414 residues: Stork-head box protein ham-1 (414 aa).

The essential for association with cell cortex stretch occupies residues 1–31 (MTYLAVVLNGPKAKNGRKVFDSFLEQNRQMF). Positions 93–170 (QQVEQMHFVP…MADHYFVSVP (78 aa)) constitute a Winged helix Storkhead-box1 domain. The tract at residues 282-362 (ECQRKARRRN…SNEEAGSISD (81 aa)) is disordered. Positions 285–295 (RKARRRNHPRR) are bi-partite nuclear localization signal. A nuclear localization signal region spans residues 321-327 (PTRRRAR). Residues 332–351 (LRSSTPNNSDSAYSISPPHT) show a composition bias toward polar residues.

It localises to the cytoplasm. The protein resides in the cell cortex. The protein localises to the nucleus. In terms of biological role, probable transcription factor. Required for asymmetric cell division in neuroblasts, perhaps acting by regulating spindle positioning and myosin polarization, and thus the position of the cleavage plane. Required to produce daughter cell size asymmetry in neuroblasts undergoing asymmetric cell division, usually giving rise to one precursor cell and one apoptotic cell. Positively modulates expression of the serine/threonine kinase pig-1/MELK during asymmetric division of the Q.a neuroblast. Plays a role in neural fate specification in several dopaminergic lineages, including the hermaphrodite-specific neuron (HSN)/phasmid neuron (PHB), acting in concert with the kinase, ham-1, and the T-box protein tbx-2 and the homeobox protein egl-5. This Caenorhabditis elegans protein is Stork-head box protein ham-1.